The following is a 520-amino-acid chain: NAD(P)H-quinone oxidoreductase subunit 2 (520 aa).

A run of 14 helical transmembrane segments spans residues 26–46 (AVLP…VDLA), 54–74 (WSPP…AMQW), 91–111 (LAIA…LISW), 120–140 (PIGE…LLCG), 144–164 (LVSV…LSGY), 179–199 (LLVG…LYGI), 220–240 (SALA…AVPF), 252–272 (PTPV…ALAI), 288–308 (LLFT…ALAQ), 314–334 (MLAY…VCGT), 342–362 (VLYM…IILF), 386–406 (LGLS…GFFG), 421–441 (LLVT…ISVI), and 474–494 (VALI…NPLF).

Belongs to the complex I subunit 2 family. NDH-1 can be composed of about 15 different subunits; different subcomplexes with different compositions have been identified which probably have different functions.

It localises to the cellular thylakoid membrane. The enzyme catalyses a plastoquinone + NADH + (n+1) H(+)(in) = a plastoquinol + NAD(+) + n H(+)(out). It carries out the reaction a plastoquinone + NADPH + (n+1) H(+)(in) = a plastoquinol + NADP(+) + n H(+)(out). NDH-1 shuttles electrons from an unknown electron donor, via FMN and iron-sulfur (Fe-S) centers, to quinones in the respiratory and/or the photosynthetic chain. The immediate electron acceptor for the enzyme in this species is believed to be plastoquinone. Couples the redox reaction to proton translocation, and thus conserves the redox energy in a proton gradient. Cyanobacterial NDH-1 also plays a role in inorganic carbon-concentration. The protein is NAD(P)H-quinone oxidoreductase subunit 2 of Prochlorococcus marinus (strain NATL2A).